We begin with the raw amino-acid sequence, 368 residues long: Divinyl chlorophyll a/b light-harvesting protein PcbA (368 aa).

Helical transmembrane passes span 27–47, 63–83, 89–109, 203–223, 243–263, and 307–327; these read FIAS…ANTL, GFVV…NGVI, MLVV…GAML, VMGG…WHIF, FVLS…AFWA, and LSNF…WHGL.

Belongs to the PsbB/PsbC family. IsiA/Pcb subfamily. The antenna complex consists of divinyl chlorophylls (a and b) and divinyl chlorophyll a/b binding proteins. Forms complexes with PSII, consisting of a PSII dimer and 4 or 8 PcbA subunits. These complexes are also found under conditions of iron-starvation. Requires divinyl chlorophyll a as cofactor. Divinyl chlorophyll b is required as a cofactor.

It localises to the cellular thylakoid membrane. The antenna complex functions as a light receptor, it captures and delivers excitation energy to photosystems II. The Prochlorales pcb genes are not related to higher plant LHCs. The chain is Divinyl chlorophyll a/b light-harvesting protein PcbA (pcbA) from Prochlorococcus marinus (strain MIT 9313).